We begin with the raw amino-acid sequence, 288 residues long: PAK4-inhibitor inka2 (288 aa).

Positions 159–196 (DPTDWTTSLLTRGRNRQPLVLGDNSFADLIKNWMDLPE) are inka box.

It belongs to the INKA family.

Its subcellular location is the nucleus. Functionally, inhibitor of the serine/threonine-protein kinase pak4/pak5. Acts by binding pak4/pak5 in a substrate-like manner, inhibiting the protein kinase activity. The polypeptide is PAK4-inhibitor inka2 (Danio rerio (Zebrafish)).